Consider the following 59-residue polypeptide: Potassium channel toxin alpha-KTx 3.10 (59 aa).

A signal peptide spans 1–22; that stretch reads MKVFFAVLIALFVCSMVIGIHG. Disulfide bonds link Cys30-Cys50, Cys36-Cys55, and Cys40-Cys57.

Belongs to the short scorpion toxin superfamily. Potassium channel inhibitor family. Alpha-KTx 03 subfamily. Expressed by the venom gland.

The protein localises to the secreted. Inhibits insect potassium channel. Is at least a 100-fold more potent against the Drosophila Shaker channel than towards its mammalian homologs Kv1.1/KCNA1 and Kv1.3/KCNA3. This is Potassium channel toxin alpha-KTx 3.10 from Buthus israelis (Israeli scorpion).